The sequence spans 103 residues: Co-chaperonin GroES (103 aa).

This sequence belongs to the GroES chaperonin family. In terms of assembly, heptamer of 7 subunits arranged in a ring. Interacts with the chaperonin GroEL.

It is found in the cytoplasm. In terms of biological role, together with the chaperonin GroEL, plays an essential role in assisting protein folding. The GroEL-GroES system forms a nano-cage that allows encapsulation of the non-native substrate proteins and provides a physical environment optimized to promote and accelerate protein folding. GroES binds to the apical surface of the GroEL ring, thereby capping the opening of the GroEL channel. This Synechococcus elongatus (strain ATCC 33912 / PCC 7942 / FACHB-805) (Anacystis nidulans R2) protein is Co-chaperonin GroES.